Here is an 88-residue protein sequence, read N- to C-terminus: MPKRSPPDTSPVARFEQSLQELEQLVQNMETGALSLEQSLGAYERGIALYRECHQALEQAQLRVRILSDPMHPDDGEPFDPSLVSTSQ.

A disordered region spans residues 69-88 (DPMHPDDGEPFDPSLVSTSQ).

This sequence belongs to the XseB family. In terms of assembly, heterooligomer composed of large and small subunits.

It localises to the cytoplasm. The catalysed reaction is Exonucleolytic cleavage in either 5'- to 3'- or 3'- to 5'-direction to yield nucleoside 5'-phosphates.. Functionally, bidirectionally degrades single-stranded DNA into large acid-insoluble oligonucleotides, which are then degraded further into small acid-soluble oligonucleotides. This Xylella fastidiosa (strain M23) protein is Exodeoxyribonuclease 7 small subunit.